The primary structure comprises 281 residues: Polyamine aminopropyltransferase (281 aa).

The PABS domain occupies 2 to 236 (DLWLKEGQIS…GYWSFTIGSK (235 aa)). Position 31 (glutamine 31) interacts with S-methyl-5'-thioadenosine. 2 residues coordinate spermidine: histidine 62 and aspartate 86. S-methyl-5'-thioadenosine contacts are provided by residues glutamate 106 and 138-139 (DG). The active-site Proton acceptor is the aspartate 156. Residue 156 to 159 (DSTD) participates in spermidine binding.

The protein belongs to the spermidine/spermine synthase family. In terms of assembly, homodimer or homotetramer.

It localises to the cytoplasm. It catalyses the reaction S-adenosyl 3-(methylsulfanyl)propylamine + putrescine = S-methyl-5'-thioadenosine + spermidine + H(+). It participates in amine and polyamine biosynthesis; spermidine biosynthesis; spermidine from putrescine: step 1/1. In terms of biological role, catalyzes the irreversible transfer of a propylamine group from the amino donor S-adenosylmethioninamine (decarboxy-AdoMet) to putrescine (1,4-diaminobutane) to yield spermidine. This is Polyamine aminopropyltransferase from Clostridium tetani (strain Massachusetts / E88).